The primary structure comprises 615 residues: Dolichyl-diphosphooligosaccharide--protein glycosyltransferase subunit 1A (615 aa).

The signal sequence occupies residues 1–28; that stretch reads MATPPPLRRVAALLLLLVAAASTPTARA. The Lumenal segment spans residues 29-437; the sequence is DLVVTRADRK…RFNNISLLRE (409 aa). Position 187 is an N6-acetyllysine (lysine 187). N-linked (GlcNAc...) asparagine glycans are attached at residues asparagine 300, asparagine 353, and asparagine 431. The helical transmembrane segment at 438-455 threads the bilayer; it reads PMMLITGFFLLFMACIVY. Residues 456 to 615 are Cytoplasmic-facing; sequence MRTDMSISKN…ESLLEYISEI (160 aa).

Belongs to the OST1 family. In terms of assembly, component of the oligosaccharyltransferase (OST) complex.

It localises to the endoplasmic reticulum membrane. Its pathway is protein modification; protein glycosylation. Its function is as follows. Subunit of the oligosaccharyl transferase (OST) complex that catalyzes the initial transfer of a defined glycan (Glc(3)Man(9)GlcNAc(2) in eukaryotes) from the lipid carrier dolichol-pyrophosphate to an asparagine residue within an Asn-X-Ser/Thr consensus motif in nascent polypeptide chains, the first step in protein N-glycosylation. N-glycosylation occurs cotranslationally and the complex associates with the Sec61 complex at the channel-forming translocon complex that mediates protein translocation across the endoplasmic reticulum (ER). All subunits are required for a maximal enzyme activity. This chain is Dolichyl-diphosphooligosaccharide--protein glycosyltransferase subunit 1A (OST1A), found in Oryza sativa subsp. japonica (Rice).